The sequence spans 276 residues: ADP-dependent (S)-NAD(P)H-hydrate dehydratase (276 aa).

Residues 7 to 274 form the YjeF C-terminal domain; sequence METLNSINIP…NEIPYAMKQL (268 aa). 3 residues coordinate (6S)-NADPHX: Ala-42, Gly-105, and His-154. Gly-216 provides a ligand contact to AMP. Asp-217 contacts (6S)-NADPHX.

This sequence belongs to the NnrD/CARKD family. Homotetramer. The cofactor is Mg(2+).

The enzyme catalyses (6S)-NADHX + ADP = AMP + phosphate + NADH + H(+). The catalysed reaction is (6S)-NADPHX + ADP = AMP + phosphate + NADPH + H(+). In terms of biological role, catalyzes the dehydration of the S-form of NAD(P)HX at the expense of ADP, which is converted to AMP. Together with NAD(P)HX epimerase, which catalyzes the epimerization of the S- and R-forms, the enzyme allows the repair of both epimers of NAD(P)HX, a damaged form of NAD(P)H that is a result of enzymatic or heat-dependent hydration. In Staphylococcus aureus (strain NCTC 8325 / PS 47), this protein is ADP-dependent (S)-NAD(P)H-hydrate dehydratase.